A 134-amino-acid polypeptide reads, in one-letter code: Profilin-2 (134 aa).

An intrachain disulfide couples Cys13 to Cys118. The short motif at 84–100 is the Involved in PIP2 interaction element; sequence AVIRGKKGSGGITIKKT. Residue Thr114 is modified to Phosphothreonine.

Belongs to the profilin family. Occurs in many kinds of cells as a complex with monomeric actin in a 1:1 ratio. Phosphorylated by MAP kinases.

The protein resides in the cytoplasm. The protein localises to the cytoskeleton. Binds to actin and affects the structure of the cytoskeleton. At high concentrations, profilin prevents the polymerization of actin, whereas it enhances it at low concentrations. This chain is Profilin-2, found in Olea europaea (Common olive).